Consider the following 198-residue polypeptide: Holliday junction resolvase RecU (198 aa).

The interval 1 to 21 is disordered; that stretch reads MVNYPHKLSSQKRQPSLSQPK. Residues 11-21 are compositionally biased toward polar residues; that stretch reads QKRQPSLSQPK. Mg(2+) is bound by residues T81, D83, E96, and Q115.

It belongs to the RecU family. Requires Mg(2+) as cofactor.

It is found in the cytoplasm. It catalyses the reaction Endonucleolytic cleavage at a junction such as a reciprocal single-stranded crossover between two homologous DNA duplexes (Holliday junction).. Its function is as follows. Endonuclease that resolves Holliday junction intermediates in genetic recombination. Cleaves mobile four-strand junctions by introducing symmetrical nicks in paired strands. Promotes annealing of linear ssDNA with homologous dsDNA. Required for DNA repair, homologous recombination and chromosome segregation. In Streptococcus pneumoniae (strain ATCC 700669 / Spain 23F-1), this protein is Holliday junction resolvase RecU.